The chain runs to 461 residues: Photosystem II CP43 reaction center protein (461 aa).

The propeptide occupies 1 to 2 (ME). N-acetylthreonine is present on threonine 3. Threonine 3 carries the phosphothreonine modification. The next 5 membrane-spanning stretches (helical) occupy residues 57-81 (LFEV…PHIA), 122-143 (LIGP…KDKN), 166-188 (KAMY…RVIT), 243-263 (TPWP…LSYS), and 279-300 (WFNN…ASQS). Glutamate 355 is a binding site for [CaMn4O5] cluster. Residues 435–459 (RARAAAAGFEKGIDRFDEPVLSMRP) form a helical membrane-spanning segment.

This sequence belongs to the PsbB/PsbC family. PsbC subfamily. PSII is composed of 1 copy each of membrane proteins PsbA, PsbB, PsbC, PsbD, PsbE, PsbF, PsbH, PsbI, PsbJ, PsbK, PsbL, PsbM, PsbT, PsbX, PsbY, PsbZ, Psb30/Ycf12, at least 3 peripheral proteins of the oxygen-evolving complex and a large number of cofactors. It forms dimeric complexes. Requires Binds multiple chlorophylls and provides some of the ligands for the Ca-4Mn-5O cluster of the oxygen-evolving complex. It may also provide a ligand for a Cl- that is required for oxygen evolution. PSII binds additional chlorophylls, carotenoids and specific lipids. as cofactor. Phosphorylated in vitro.

The protein localises to the plastid. It is found in the chloroplast thylakoid membrane. Its function is as follows. One of the components of the core complex of photosystem II (PSII). It binds chlorophyll and helps catalyze the primary light-induced photochemical processes of PSII. PSII is a light-driven water:plastoquinone oxidoreductase, using light energy to abstract electrons from H(2)O, generating O(2) and a proton gradient subsequently used for ATP formation. The polypeptide is Photosystem II CP43 reaction center protein (Chlamydomonas reinhardtii (Chlamydomonas smithii)).